Reading from the N-terminus, the 317-residue chain is Adenine deaminase (317 aa).

3 residues coordinate Zn(2+): His-14, His-16, and His-194. Residue Glu-197 is the Proton donor of the active site. Asp-275 contacts Zn(2+). Asp-276 lines the substrate pocket.

Belongs to the metallo-dependent hydrolases superfamily. Adenosine and AMP deaminases family. Adenine deaminase type 2 subfamily. The cofactor is Zn(2+).

It carries out the reaction adenine + H2O + H(+) = hypoxanthine + NH4(+). Catalyzes the hydrolytic deamination of adenine to hypoxanthine. Plays an important role in the purine salvage pathway and in nitrogen catabolism. This Pseudomonas fluorescens (strain Pf0-1) protein is Adenine deaminase.